A 124-amino-acid chain; its full sequence is 5-hydroxyisourate hydrolase (124 aa).

3 residues coordinate substrate: His15, Arg53, and Tyr121.

It belongs to the transthyretin family. 5-hydroxyisourate hydrolase subfamily. As to quaternary structure, homotetramer.

It catalyses the reaction 5-hydroxyisourate + H2O = 5-hydroxy-2-oxo-4-ureido-2,5-dihydro-1H-imidazole-5-carboxylate + H(+). In terms of biological role, catalyzes the hydrolysis of 5-hydroxyisourate (HIU) to 2-oxo-4-hydroxy-4-carboxy-5-ureidoimidazoline (OHCU). The polypeptide is 5-hydroxyisourate hydrolase (Mesorhizobium japonicum (strain LMG 29417 / CECT 9101 / MAFF 303099) (Mesorhizobium loti (strain MAFF 303099))).